The sequence spans 153 residues: uncharacterized protein (153 aa).

Residues 16 to 40 are disordered; sequence DEQTPLLNNDGIQRTPPSAEADMSL. Over residues 20-31 the composition is skewed to polar residues; it reads PLLNNDGIQRTP.

This is an uncharacterized protein from Schizosaccharomyces pombe (strain 972 / ATCC 24843) (Fission yeast).